The sequence spans 116 residues: Fluoride-specific ion channel FluC 1 (116 aa).

Transmembrane regions (helical) follow at residues 1-21, 31-51, 58-78, and 92-112; these read MGKL…RYTV, IPAG…FLTF, MVYL…TFAY, and FFLN…IAYL. Na(+) contacts are provided by Gly-68 and Thr-71.

The protein belongs to the fluoride channel Fluc/FEX (TC 1.A.43) family.

It is found in the cell membrane. It catalyses the reaction fluoride(in) = fluoride(out). Its activity is regulated as follows. Na(+) is not transported, but it plays an essential structural role and its presence is essential for fluoride channel function. Its function is as follows. Fluoride-specific ion channel. Important for reducing fluoride concentration in the cell, thus reducing its toxicity. The polypeptide is Fluoride-specific ion channel FluC 1 (Methanosarcina barkeri (strain Fusaro / DSM 804)).